Consider the following 120-residue polypeptide: uncharacterized protein (120 aa).

The Nudix hydrolase domain maps to 29-120 (QRQAAVLVPI…QVTPVVGIIP (92 aa)). Residues 67–89 (GAVDNSDATLIAAALREAQEEVA) carry the Nudix box motif. E83 and E87 together coordinate Mg(2+).

The protein belongs to the Nudix hydrolase family. PCD1 subfamily. It depends on Mn(2+) as a cofactor. Requires Mg(2+) as cofactor.

In terms of biological role, probably mediates the hydrolysis of some nucleoside diphosphate derivatives. This is an uncharacterized protein from Klebsiella aerogenes (Enterobacter aerogenes).